Here is a 253-residue protein sequence, read N- to C-terminus: 2,3-bisphosphoglycerate-dependent phosphoglycerate mutase (253 aa).

Residues 12–19 (RHGESEWN), 25–26 (TG), Arg-64, 91–94 (ERHY), Lys-102, and 118–119 (RR) contribute to the substrate site. Catalysis depends on His-13, which acts as the Tele-phosphohistidine intermediate. Glu-91 serves as the catalytic Proton donor/acceptor. Residues 126–148 (PPLADGSEFSQSDDPRYASIPPE) are disordered. 187-188 (GN) contributes to the substrate binding site.

It belongs to the phosphoglycerate mutase family. BPG-dependent PGAM subfamily.

The enzyme catalyses (2R)-2-phosphoglycerate = (2R)-3-phosphoglycerate. Its pathway is carbohydrate degradation; glycolysis; pyruvate from D-glyceraldehyde 3-phosphate: step 3/5. Functionally, catalyzes the interconversion of 2-phosphoglycerate and 3-phosphoglycerate. The sequence is that of 2,3-bisphosphoglycerate-dependent phosphoglycerate mutase from Streptomyces avermitilis (strain ATCC 31267 / DSM 46492 / JCM 5070 / NBRC 14893 / NCIMB 12804 / NRRL 8165 / MA-4680).